Consider the following 323-residue polypeptide: L-lactate dehydrogenase (323 aa).

Residues Val-18, Asp-39, Tyr-69, and 83–84 (GA) contribute to the NAD(+) site. Residues Gln-86 and Arg-92 each contribute to the substrate site. NAD(+) contacts are provided by residues Ser-105, 122–124 (VAN), and Ser-147. Residue 124 to 127 (NPVD) participates in substrate binding. Position 152-155 (152-155 (DTGR)) interacts with substrate. The Proton acceptor role is filled by His-179. The residue at position 223 (Tyr-223) is a Phosphotyrosine. Residue Thr-232 participates in substrate binding.

The protein belongs to the LDH/MDH superfamily. LDH family. In terms of assembly, homotetramer.

It localises to the cytoplasm. The catalysed reaction is (S)-lactate + NAD(+) = pyruvate + NADH + H(+). Its pathway is fermentation; pyruvate fermentation to lactate; (S)-lactate from pyruvate: step 1/1. With respect to regulation, under neutral conditions, the reaction is stimulated 4-fold by fructose 1,6-bisphosphate (FBP), however the L-lactate dehydrogenase is a nonallosteric enzyme. Calcium and zinc ions at 1 mM stimulate the activity almost 2-fold. Weakly inhibited by cadmium, cobalt and copper ions. Its function is as follows. Catalyzes the conversion of lactate to pyruvate. This is L-lactate dehydrogenase from Lactobacillus helveticus (Lactobacillus suntoryeus).